A 206-amino-acid polypeptide reads, in one-letter code: Capsid assembly scaffolding protein (206 aa).

A propeptide spanning residues 1 to 13 (MEENKLKFNLQFF) is cleaved from the precursor. 3 disordered regions span residues 1-50 (MEEN…PEQQ), 83-134 (AAKL…VDSS), and 173-206 (RQSPLTGGDSFNHSTKNKPQNLAEIARQKRIIKN). 2 stretches are compositionally biased toward basic and acidic residues: residues 25–38 (GDGKKGNPDKKEND) and 83–127 (AAKL…KMLS). Polar residues predominate over residues 173–192 (RQSPLTGGDSFNHSTKNKPQ). A helix-and-hook motif region spans residues 186–206 (STKNKPQNLAEIARQKRIIKN).

As to quaternary structure, found in the procapsid with the major capsid protein in a 2:1 capsid protein:scaffold protein molecular ratio. Post-translationally, the N-terminus is cleaved by ribosomal processing protease Prp.

Scaffolding protein involved in icosahedric procapsid assembly. Coassembles with capsid protein(s) to form the procapsid. The scaffolding protein is found within the capsid as a series of concentric shells. During DNA packaging, the scaffolding protein molecules are released from the procapsid. This is Capsid assembly scaffolding protein from Staphylococcus phage 80alpha.